We begin with the raw amino-acid sequence, 341 residues long: S-adenosylmethionine:tRNA ribosyltransferase-isomerase (341 aa).

Belongs to the QueA family. As to quaternary structure, monomer.

Its subcellular location is the cytoplasm. It catalyses the reaction 7-aminomethyl-7-carbaguanosine(34) in tRNA + S-adenosyl-L-methionine = epoxyqueuosine(34) in tRNA + adenine + L-methionine + 2 H(+). It participates in tRNA modification; tRNA-queuosine biosynthesis. Functionally, transfers and isomerizes the ribose moiety from AdoMet to the 7-aminomethyl group of 7-deazaguanine (preQ1-tRNA) to give epoxyqueuosine (oQ-tRNA). This is S-adenosylmethionine:tRNA ribosyltransferase-isomerase from Caldanaerobacter subterraneus subsp. tengcongensis (strain DSM 15242 / JCM 11007 / NBRC 100824 / MB4) (Thermoanaerobacter tengcongensis).